A 161-amino-acid polypeptide reads, in one-letter code: Nucleotide-binding protein BMASAVP1_A0673 (161 aa).

Belongs to the YajQ family.

In terms of biological role, nucleotide-binding protein. The sequence is that of Nucleotide-binding protein BMASAVP1_A0673 from Burkholderia mallei (strain SAVP1).